The following is a 337-amino-acid chain: Beta-glucosidase-like protein NCA3, mitochondrial (337 aa).

Residues 57 to 67 (ESAATTTTLSS) show a composition bias toward low complexity. The interval 57–84 (ESAATTTTLSSSEKDTSEQKRDGGFQDG) is disordered. Residues 68–80 (SEKDTSEQKRDGG) are compositionally biased toward basic and acidic residues.

Belongs to the SUN family.

It localises to the mitochondrion. In terms of biological role, involved in the mitochondrial expression of subunits 6 and 8 of the F0-F1 ATP synthase. The protein is Beta-glucosidase-like protein NCA3, mitochondrial (NCA3) of Saccharomyces cerevisiae (strain ATCC 204508 / S288c) (Baker's yeast).